The following is a 465-amino-acid chain: MAEHKPWDGRFAEKTDDMVEAFTSSIQVDKRLYAHDITGSIAHARTLAEAGVITSDEADAMEKGLRQVKGEIEAGNFKYDDSLEDIHMHIESRLTEILGPTAAKLHTGRSRNDQIALDNRLYLRDETRRIIAMLHELRQAIVDSAQAHLDYFVPGYTHLQRAQPVLLSHHLMAYYEMFTRDSDRFTDALYRINVMPLGSAALAGTTFPLDREYTASLLGFEGVTQNSMDAVSDRDFIMEFLSDASICMVHLSRMSEELVLWSSSEFAFLNMPDAFATGSSIMPQKKNPDVPELVRGKTGRVVGSLMAILTTMKSLPMAYNRDMQEDKPPLFDAVDTLKACVAMFARMVPKLEFNRRNMFDASNQGFLNATDMADYLVEKGVPFREAHGIVGRAVAYALDRGRELHEISLNDLRKFSDKLEKDLYEALTVEHVVERRRTIGGTASVNVIAAIGRAQTQLQAETSGD.

This sequence belongs to the lyase 1 family. Argininosuccinate lyase subfamily.

It is found in the cytoplasm. It catalyses the reaction 2-(N(omega)-L-arginino)succinate = fumarate + L-arginine. It participates in amino-acid biosynthesis; L-arginine biosynthesis; L-arginine from L-ornithine and carbamoyl phosphate: step 3/3. The sequence is that of Argininosuccinate lyase from Desulfatibacillum aliphaticivorans.